Consider the following 89-residue polypeptide: Repressor protein (89 aa).

The H-T-H motif DNA-binding region spans 29-52 (SGDIARNTGYSRRRISDRCTVLVD).

Transcriptional repressor expressed under lysogenic conditions, which specifically binds the host DNA site 'RRGAAG'. The binding occurs cooperatively, probably as 2 copies of a dimer. Possibly prevents RNA polymerase access to the promoters for lytic cell cycle transcription. The protein is Repressor protein (T6) of Halobacterium salinarum (Halobacterium halobium).